Consider the following 432-residue polypeptide: Cyclic GMP-AMP synthase-like receptor (432 aa).

Residues Ser59 and 71-73 each bind ATP; that span reads EFD. Residues Glu71, Asp73, and Asp205 each contribute to the Mg(2+) site. Residues Asp205 and 255 to 262 each bind GTP; that span reads KQTCSVLE. Residues 259–262, Lys284, and 303–307 each bind ATP; these read SVLE and TYALK.

The protein belongs to the mab-21 family. Mg(2+) serves as cofactor. The cofactor is Mn(2+).

It carries out the reaction GTP + ATP = 2',3'-cGAMP + 2 diphosphate. The catalysed reaction is GTP + ATP = pppGp(2'-5')A + diphosphate. It catalyses the reaction pppGp(2'-5')A = 2',3'-cGAMP + diphosphate. Functionally, nucleotidyltransferase that catalyzes the formation of cyclic GMP-AMP (2',3'-cGAMP) from ATP and GTP and plays a key role in innate immunity. Directly binds some unknown ligand, activating the nucleotidyltransferase activity, leading to synthesis of 2',3'-cGAMP, a second messenger that binds to and activates Sting, thereby triggering the immune response via activation of the NF-kappa-B transcription factor. This Pocillopora damicornis (Cauliflower coral) protein is Cyclic GMP-AMP synthase-like receptor.